Here is a 137-residue protein sequence, read N- to C-terminus: Phosphoribosyl-AMP cyclohydrolase (137 aa).

Mg(2+) is bound at residue D84. C85 serves as a coordination point for Zn(2+). The Mg(2+) site is built by D86 and D88. 2 residues coordinate Zn(2+): C101 and C108.

Belongs to the PRA-CH family. Homodimer. It depends on Mg(2+) as a cofactor. Zn(2+) serves as cofactor.

It localises to the cytoplasm. It catalyses the reaction 1-(5-phospho-beta-D-ribosyl)-5'-AMP + H2O = 1-(5-phospho-beta-D-ribosyl)-5-[(5-phospho-beta-D-ribosylamino)methylideneamino]imidazole-4-carboxamide. It participates in amino-acid biosynthesis; L-histidine biosynthesis; L-histidine from 5-phospho-alpha-D-ribose 1-diphosphate: step 3/9. In terms of biological role, catalyzes the hydrolysis of the adenine ring of phosphoribosyl-AMP. This Chlorobaculum parvum (strain DSM 263 / NCIMB 8327) (Chlorobium vibrioforme subsp. thiosulfatophilum) protein is Phosphoribosyl-AMP cyclohydrolase.